A 207-amino-acid polypeptide reads, in one-letter code: Small ribosomal subunit protein uS5 (207 aa).

The segment at 1–51 (MTDTPTKQEITSKNDKVPGAIPGEQKKNNRNNDRKRNRRGDSKNLERDSDW) is disordered. The segment covering 24–51 (EQKKNNRNNDRKRNRRGDSKNLERDSDW) has biased composition (basic and acidic residues). One can recognise an S5 DRBM domain in the interval 51-114 (WQERVVQIRR…SDGKKNLVRV (64 aa)).

This sequence belongs to the universal ribosomal protein uS5 family. In terms of assembly, part of the 30S ribosomal subunit. Contacts proteins S4 and S8.

In terms of biological role, with S4 and S12 plays an important role in translational accuracy. Functionally, located at the back of the 30S subunit body where it stabilizes the conformation of the head with respect to the body. This chain is Small ribosomal subunit protein uS5, found in Prochlorococcus marinus (strain MIT 9312).